The following is a 223-amino-acid chain: Serine/threonine/tyrosine-interacting protein (223 aa).

The 149-residue stretch at 28 to 176 (EMQEILPGLF…LQEYEAIYLA (149 aa)) folds into the Tyrosine-protein phosphatase domain. Positions 76–78 (FQQ) match the Interaction with FBXW7 motif. 3 positions are modified to phosphoserine: serine 184, serine 193, and serine 201. Residues 197–223 (GTTGSLKRTHEEEDDFGTMQVATAQNG) are disordered.

Belongs to the protein-tyrosine phosphatase family. Non-receptor class subfamily. In terms of assembly, interacts with MAPK1; independently of MAPK1 phosphorylation status. Interacts with CARHSP1/Crhsp-24. Interacts (via FQQ motif) with FBXW7 (via F-box domain); the interaction is direct and prevents FBXW7 interaction with SKP1, a component of the SCF(FBXW7) complex.

It is found in the nucleus. It localises to the cytoplasm. The protein resides in the cytosol. Its function is as follows. Catalytically inactive phosphatase. Acts as a nuclear anchor for MAPK1/MAPK3 (ERK1/ERK2). Modulates cell-fate decisions and cell migration by spatiotemporal regulation of MAPK1/MAPK3 (ERK1/ERK2). By binding to the F-box of FBXW7, prevents the assembly of FBXW7 into the SCF E3 ubiquitin-protein ligase complex, and thereby inhibits degradation of its substrates. Plays a role in spermatogenesis. The protein is Serine/threonine/tyrosine-interacting protein (STYX) of Pongo abelii (Sumatran orangutan).